We begin with the raw amino-acid sequence, 210 residues long: Redox-sensing transcriptional repressor Rex (210 aa).

The segment at residues 17-56 is a DNA-binding region (H-T-H motif); sequence KYHRYLGNLMRNDVDRISSKELSEKIGFTASQIRQDLNCF. Residue 91–96 coordinates NAD(+); sequence GAGNIG.

This sequence belongs to the transcriptional regulatory Rex family. Homodimer.

The protein localises to the cytoplasm. Functionally, modulates transcription in response to changes in cellular NADH/NAD(+) redox state. This Clostridium kluyveri (strain ATCC 8527 / DSM 555 / NBRC 12016 / NCIMB 10680 / K1) protein is Redox-sensing transcriptional repressor Rex.